A 640-amino-acid polypeptide reads, in one-letter code: tRNA-dihydrouridine(47) synthase [NAD(P)(+)]-like (640 aa).

Polar residues predominate over residues 1–11 (MAESEGSNTEN). Disordered stretches follow at residues 1-23 (MAES…ENLD) and 43-123 (FIDA…HSQF). Residues 43–57 (FIDADGKDVTEKETC) are compositionally biased toward basic and acidic residues. A compositionally biased stretch (polar residues) spans 58-72 (SELSLNDAENTTRTE). The segment covering 77–86 (PEAKRIKLDD) has biased composition (basic and acidic residues). Basic residues predominate over residues 104-120 (EKKRARGQNKSRPHMKH). C3H1-type zinc fingers lie at residues 123-153 (FEEN…HDVA) and 161-191 (EDIR…HLGE). FMN contacts are provided by residues 301–303 (PLT) and Gln355. Cys386 functions as the Proton donor in the catalytic mechanism. Residues Lys425, His455, 487–489 (NGD), and 510–511 (AR) each bind FMN.

It belongs to the Dus family. Dus3 subfamily. The cofactor is FMN.

The catalysed reaction is 5,6-dihydrouridine(47) in tRNA + NAD(+) = uridine(47) in tRNA + NADH + H(+). It carries out the reaction 5,6-dihydrouridine(47) in tRNA + NADP(+) = uridine(47) in tRNA + NADPH + H(+). It catalyses the reaction a 5,6-dihydrouridine in mRNA + NAD(+) = a uridine in mRNA + NADH + H(+). The enzyme catalyses a 5,6-dihydrouridine in mRNA + NADP(+) = a uridine in mRNA + NADPH + H(+). Functionally, catalyzes the synthesis of dihydrouridine, a modified base, in various RNAs, such as tRNAs, mRNAs and some long non-coding RNAs (lncRNAs). Mainly modifies the uridine in position 47 (U47) in the D-loop of most cytoplasmic tRNAs. Also able to mediate the formation of dihydrouridine in some mRNAs, thereby regulating their translation. The sequence is that of tRNA-dihydrouridine(47) synthase [NAD(P)(+)]-like (dus3l) from Xenopus laevis (African clawed frog).